A 218-amino-acid polypeptide reads, in one-letter code: Flagellin B1 (218 aa).

Positions 1-12 are excised as a propeptide; it reads MNIKEFLSNKKG. N-linked (GlcNAc...) asparagine glycans are attached at residues asparagine 38, asparagine 71, asparagine 77, asparagine 115, and asparagine 136.

The protein belongs to the archaeal flagellin family. In terms of processing, N-linked glycans consist of the 779 Da trisaccharide beta-ManNAc(Thr)-(1-4)-beta-GlcNAc3NAcA-(1-3)-beta-GlcNAc.

It localises to the archaeal flagellum. Its function is as follows. Flagellin is the subunit protein which polymerizes to form the filaments of archaeal flagella. This is Flagellin B1 (flaB1) from Methanococcus voltae.